Consider the following 375-residue polypeptide: Anhydro-N-acetylmuramic acid kinase (375 aa).

Residue 12 to 19 (GTSMDGVD) coordinates ATP.

This sequence belongs to the anhydro-N-acetylmuramic acid kinase family.

The enzyme catalyses 1,6-anhydro-N-acetyl-beta-muramate + ATP + H2O = N-acetyl-D-muramate 6-phosphate + ADP + H(+). The protein operates within amino-sugar metabolism; 1,6-anhydro-N-acetylmuramate degradation. It participates in cell wall biogenesis; peptidoglycan recycling. Functionally, catalyzes the specific phosphorylation of 1,6-anhydro-N-acetylmuramic acid (anhMurNAc) with the simultaneous cleavage of the 1,6-anhydro ring, generating MurNAc-6-P. Is required for the utilization of anhMurNAc either imported from the medium or derived from its own cell wall murein, and thus plays a role in cell wall recycling. The sequence is that of Anhydro-N-acetylmuramic acid kinase from Photobacterium profundum (strain SS9).